The sequence spans 601 residues: Elongation factor 4 (601 aa).

One can recognise a tr-type G domain in the interval 5-187 (IRKKNFCIIA…AICKHVPSPR (183 aa)). Residues 17-22 (DHGKST) and 134-137 (NKID) contribute to the GTP site.

This sequence belongs to the TRAFAC class translation factor GTPase superfamily. Classic translation factor GTPase family. LepA subfamily.

It is found in the cell inner membrane. It catalyses the reaction GTP + H2O = GDP + phosphate + H(+). Functionally, required for accurate and efficient protein synthesis under certain stress conditions. May act as a fidelity factor of the translation reaction, by catalyzing a one-codon backward translocation of tRNAs on improperly translocated ribosomes. Back-translocation proceeds from a post-translocation (POST) complex to a pre-translocation (PRE) complex, thus giving elongation factor G a second chance to translocate the tRNAs correctly. Binds to ribosomes in a GTP-dependent manner. In Borrelia garinii subsp. bavariensis (strain ATCC BAA-2496 / DSM 23469 / PBi) (Borreliella bavariensis), this protein is Elongation factor 4.